The primary structure comprises 310 residues: Olfactory receptor 5W2 (310 aa).

Residues 1–25 (MDWENCSSLTDFFLLGITNNPEMKV) lie on the Extracellular side of the membrane. N-linked (GlcNAc...) asparagine glycosylation is present at Asn-5. Residues 26–46 (TLFAVFLAVYIINFSANLGMI) traverse the membrane as a helical segment. Residues 47-54 (VLIRMDYQ) are Cytoplasmic-facing. Residues 55-75 (LHTPMYFFLSHLSFCDLCYST) traverse the membrane as a helical segment. Residues 76 to 99 (ATGPKMLVDLLAKNKSIPFYGCAL) are Extracellular-facing. A helical membrane pass occupies residues 100–120 (QFLVFCIFADSECLLLSVMAF). Residues 121-139 (DRYKAIINPLLYTVNMSSR) lie on the Cytoplasmic side of the membrane. The chain crosses the membrane as a helical span at residues 140-160 (VCYLLLTGVYLVGIADALIHM). Over 161–196 (TLAFRLCFCGSNEINHFFCDIPPLLLLSRSDTQVNE) the chain is Extracellular. The chain crosses the membrane as a helical span at residues 197 to 217 (LVLFTVFGFIELSTISGVFIS). Over 218-237 (YCYIILSVLEIHSAEGRFKA) the chain is Cytoplasmic. Residues 238–258 (LSTCTSHLSAVAIFQGTLLFM) form a helical membrane-spanning segment. The Extracellular portion of the chain corresponds to 259–271 (YFRPSSSYSLDQD). Residues 272–292 (KMTSLFYTLVVPMLNPLIYSL) traverse the membrane as a helical segment. Topologically, residues 293–310 (RNKDVKEALKKLKNKILF) are cytoplasmic.

The protein belongs to the G-protein coupled receptor 1 family.

The protein localises to the cell membrane. In terms of biological role, odorant receptor. The polypeptide is Olfactory receptor 5W2 (OR5W2) (Homo sapiens (Human)).